We begin with the raw amino-acid sequence, 182 residues long: Photosystem I assembly protein Ycf4 (182 aa).

2 helical membrane passes run 22–42 (WAIIIGSGGLGFLFTGLSSYL) and 66–86 (FYGILGIFFSLYLGLTILFSV).

Belongs to the Ycf4 family.

The protein localises to the plastid. It is found in the chloroplast thylakoid membrane. Seems to be required for the assembly of the photosystem I complex. This is Photosystem I assembly protein Ycf4 from Tupiella akineta (Green alga).